The following is a 484-amino-acid chain: MEWRGILCSLLFIVSVGESSSRFGIMWHPNLGVDSGQYLTWPILSASVFVVIAILLPMYLIFEHLASYNQPEEQKFLIGLILMVPVYAVESFLSLVNSEAAFNCEVIRDCYEAFALYCFERYLIACLDGEERTIEFMEQQTVITQSTPLLEGTCSYGVVEHPFPMNCFVKDWSLGPQFYHAVKIGIVQYMILKMICALLAMILEAFGVYGEGKFAWNYGYPYLAVVLNFSQTWALYCLVQFYNVIKDKLAPIKPLAKFLTFKSIVFLTWWQGIIVAFLFSMGLVKGSLAKELKTRIQDYIICIEMGIAAVVHLYVFPAAPYKRGERCVRNVAVMSDYASIDVPPDPEEVKDSERTTRTRYGRHDDREKRLNFPQSVRDVVLGSGEIIVDDMRFTVSHVVEPVERGIAKINRTFHQISENVKRFEQQKKTTKDDSYVIPLNQWAKEFSDVHENLYDGGSVSDSGLGSTNRHHQSRVSGLWTRMRR.

The signal sequence occupies residues 1 to 19 (MEWRGILCSLLFIVSVGES). 6 helical membrane passes run 42–62 (PILS…YLIF), 76–96 (FLIG…LSLV), 190–210 (MILK…GVYG), 219–239 (GYPY…YCLV), 264–284 (IVFL…MGLV), and 299–319 (YIIC…FPAA). Residues 344–364 (PDPEEVKDSERTTRTRYGRHD) form a disordered region. Residues 347–364 (EEVKDSERTTRTRYGRHD) show a composition bias toward basic and acidic residues. The stretch at 406–428 (IAKINRTFHQISENVKRFEQQKK) forms a coiled coil. Positions 459-484 (VSDSGLGSTNRHHQSRVSGLWTRMRR) are disordered.

Belongs to the TMEM184 family.

The protein resides in the membrane. The protein is Protein LAZ1 homolog 1 of Arabidopsis thaliana (Mouse-ear cress).